We begin with the raw amino-acid sequence, 58 residues long: Small ribosomal subunit protein bS21 (58 aa).

The segment covering 32-42 (IRKREHYEKPS) has biased composition (basic and acidic residues). The segment at 32–58 (IRKREHYEKPSVKRKKKSEAARKRKFK) is disordered. The span at 43–58 (VKRKKKSEAARKRKFK) shows a compositional bias: basic residues.

The protein belongs to the bacterial ribosomal protein bS21 family.

This Lachnoclostridium phytofermentans (strain ATCC 700394 / DSM 18823 / ISDg) (Clostridium phytofermentans) protein is Small ribosomal subunit protein bS21.